Consider the following 296-residue polypeptide: Ribosomal protein L11 methyltransferase (296 aa).

S-adenosyl-L-methionine-binding residues include threonine 139, glycine 163, aspartate 185, and asparagine 232.

This sequence belongs to the methyltransferase superfamily. PrmA family.

It is found in the cytoplasm. It catalyses the reaction L-lysyl-[protein] + 3 S-adenosyl-L-methionine = N(6),N(6),N(6)-trimethyl-L-lysyl-[protein] + 3 S-adenosyl-L-homocysteine + 3 H(+). In terms of biological role, methylates ribosomal protein L11. The protein is Ribosomal protein L11 methyltransferase of Picosynechococcus sp. (strain ATCC 27264 / PCC 7002 / PR-6) (Agmenellum quadruplicatum).